A 238-amino-acid polypeptide reads, in one-letter code: Tabinhibitin 5 (238 aa).

An N-terminal signal peptide occupies residues Met-1–Ala-23. The Cell attachment site motif lies at Arg-32–Asp-34. The 145-residue stretch at Leu-67–Phe-211 folds into the SCP domain.

It belongs to the CRISP family. Expressed in salivary glands.

It localises to the secreted. Its function is as follows. Inhibits platelet aggregation induced by all agonists tested (ADP, arachidonic acid, the thromboxane A2 analog U46619, thrombin, and snake venom snaclecs (TMVA that activates platelet through GPIB, and stejnulxin that specifically acts through GPVI (GP6))). May act by competing with fibrinogen for binding to glycoprotein IIb/IIIa (ITGA2B/ITGB3). This is Tabinhibitin 5 from Tabanus yao (Horsefly).